Consider the following 403-residue polypeptide: Indoleamine 2,3-dioxygenase 1 (403 aa).

His-346 contacts heme b. Residues 360–381 (QQPKENKTSEDPSKLEAKGTGG) form a disordered region. Positions 363 to 376 (KENKTSEDPSKLEA) are enriched in basic and acidic residues.

The protein belongs to the indoleamine 2,3-dioxygenase family. Monomer. Heme b serves as cofactor. As to expression, expressed in mature dendritic cells located in lymphoid organs (including lymph nodes, spleen, tonsils, Peyers's patches, the gut lamina propria, and the thymic medulla), in some epithelial cells of the female genital tract, as well as in endothelial cells of term placenta and in lung parenchyma. Weakly or not expressed in most normal tissues, but mostly inducible in most tissues. Expressed in more than 50% of tumors, either by tumoral, stromal, or endothelial cells (expression in tumor is associated with a worse clinical outcome). Not overexpressed in tumor-draining lymph nodes.

The protein localises to the cytoplasm. The protein resides in the cytosol. The enzyme catalyses D-tryptophan + O2 = N-formyl-D-kynurenine. It carries out the reaction L-tryptophan + O2 = N-formyl-L-kynurenine. It functions in the pathway amino-acid degradation; L-tryptophan degradation via kynurenine pathway; L-kynurenine from L-tryptophan: step 1/2. With respect to regulation, activity is inhibited by and MTH-trp (methylthiohydantoin-DL-tryptophan), modestly inhibited by L-1MT (1-methyl-L-tryptophan) but not D-1MT (1-methyl-D-tryptophan). Its function is as follows. Catalyzes the first and rate limiting step of the catabolism of the essential amino acid tryptophan along the kynurenine pathway. Involved in the peripheral immune tolerance, contributing to maintain homeostasis by preventing autoimmunity or immunopathology that would result from uncontrolled and overreacting immune responses. Tryptophan shortage inhibits T lymphocytes division and accumulation of tryptophan catabolites induces T-cell apoptosis and differentiation of regulatory T-cells. Acts as a suppressor of anti-tumor immunity. Limits the growth of intracellular pathogens by depriving tryptophan. Protects the fetus from maternal immune rejection. This Homo sapiens (Human) protein is Indoleamine 2,3-dioxygenase 1.